The primary structure comprises 304 residues: Large ribosomal subunit protein uL18 (304 aa).

Residues 285–304 (LNALNSSAGADDDDEEEDDE) are disordered. Residues 294 to 304 (ADDDDEEEDDE) show a composition bias toward acidic residues.

It belongs to the universal ribosomal protein uL18 family. Component of the large ribosomal subunit (LSU).

Its subcellular location is the cytoplasm. It is found in the nucleus. In terms of biological role, component of the ribosome, a large ribonucleoprotein complex responsible for the synthesis of proteins in the cell. The small ribosomal subunit (SSU) binds messenger RNAs (mRNAs) and translates the encoded message by selecting cognate aminoacyl-transfer RNA (tRNA) molecules. The large subunit (LSU) contains the ribosomal catalytic site termed the peptidyl transferase center (PTC), which catalyzes the formation of peptide bonds, thereby polymerizing the amino acids delivered by tRNAs into a polypeptide chain. The nascent polypeptides leave the ribosome through a tunnel in the LSU and interact with protein factors that function in enzymatic processing, targeting, and the membrane insertion of nascent chains at the exit of the ribosomal tunnel. The chain is Large ribosomal subunit protein uL18 (RPL5A) from Oryza sativa subsp. indica (Rice).